A 134-amino-acid polypeptide reads, in one-letter code: Antifungal protein ginkbilobin-2 (134 aa).

A signal peptide spans 1 to 26 (MKTMRMNSAFILAFALAAAMLILTEA). The Gnk2-homologous domain maps to 29–134 (TAFVSSACNT…CFIQYEQRSF (106 aa)). Intrachain disulfides connect Cys-36/Cys-112, Cys-88/Cys-97, and Cys-100/Cys-125. Asn-37 provides a ligand contact to alpha-D-mannopyranose. Residues Arg-119 and Glu-130 each contribute to the alpha-D-mannopyranose site.

In terms of assembly, binds actin in vitro.

The protein localises to the secreted. Its function is as follows. Possesses antifungal activity against F.oxysporum, T.reesei and C.albicans. Weakly inhibits the aspartic acid protease pepsin activity. Exerts antifungal activity against S.cerevisiae and F.culmorum through its carbohydrate-binding specificity. Acts as a lectin that stricly recognizes alpha-1,2-linked mannose moieties and interacts with the yeast cell wall mannan polysaccharide. Can interfere with the fungal actin remodeling resulting to the activation of an actin-dependent cell death. The chain is Antifungal protein ginkbilobin-2 from Ginkgo biloba (Ginkgo).